The sequence spans 407 residues: Cation efflux system protein CusB (407 aa).

The N-terminal stretch at 1-28 is a signal peptide; it reads MKKIALIIGSMIAGGIISAAGFTWFAKA.

This sequence belongs to the membrane fusion protein (MFP) (TC 8.A.1) family. The cus efflux system is composed of CusA, CusB, CusC and CusF.

Functionally, part of a cation efflux system that mediates resistance to copper and silver. The protein is Cation efflux system protein CusB (cusB) of Escherichia coli O157:H7.